The primary structure comprises 484 residues: Malonate-semialdehyde dehydrogenase 1 (484 aa).

Phe153, Lys177, Glu180, Arg181, Ser230, and Thr252 together coordinate NAD(+). The active-site Nucleophile is Cys285. Glu385 is an NAD(+) binding site.

It belongs to the aldehyde dehydrogenase family. IolA subfamily. Homotetramer.

It catalyses the reaction 3-oxopropanoate + NAD(+) + CoA + H2O = hydrogencarbonate + acetyl-CoA + NADH + H(+). The enzyme catalyses 2-methyl-3-oxopropanoate + NAD(+) + CoA + H2O = propanoyl-CoA + hydrogencarbonate + NADH + H(+). It participates in polyol metabolism; myo-inositol degradation into acetyl-CoA; acetyl-CoA from myo-inositol: step 7/7. Functionally, catalyzes the oxidation of malonate semialdehyde (MSA) and methylmalonate semialdehyde (MMSA) into acetyl-CoA and propanoyl-CoA, respectively. Is involved in a myo-inositol catabolic pathway. Bicarbonate, and not CO2, is the end-product of the enzymatic reaction. This is Malonate-semialdehyde dehydrogenase 1 from Geobacillus thermodenitrificans (strain NG80-2).